The sequence spans 356 residues: Glutamine synthetase cytosolic isozyme 1-4 (356 aa).

Position 2 is an N-acetylserine (S2). Phosphoserine is present on residues S2 and S48. A GS beta-grasp domain is found at I19 to G99. The interval A37–D66 is disordered. Positions K106–P356 constitute a GS catalytic domain.

It belongs to the glutamine synthetase family. As to quaternary structure, homooctamer. Interacts with GRF3. As to expression, expressed in the pericycle in the region of lateral root emergence.

It is found in the cytoplasm. It catalyses the reaction L-glutamate + NH4(+) + ATP = L-glutamine + ADP + phosphate + H(+). Its function is as follows. High-affinity glutamine synthetase. May contribute to the homeostatic control of glutamine synthesis in roots. In Arabidopsis thaliana (Mouse-ear cress), this protein is Glutamine synthetase cytosolic isozyme 1-4.